Here is a 467-residue protein sequence, read N- to C-terminus: Probable lipase C1672.09 (467 aa).

Topologically, residues 1 to 17 (MIQLPFIQRLKWEEYMA) are cytoplasmic. A helical; Signal-anchor for type II membrane protein membrane pass occupies residues 18–38 (LFLGFFFVIFEKLLSCLAFMI). Residues 39–467 (HNTLGLFYRS…NHIAPRNKPI (429 aa)) are Lumenal-facing. Phosphoserine is present on Ser66. An AB hydrolase-1 domain is found at 127 to 421 (PVVYCHHGLL…SYEHLDMIWA (295 aa)). The active-site Nucleophile is Ser222. Asn311 and Asn316 each carry an N-linked (GlcNAc...) asparagine glycan. Active-site charge relay system residues include Asp389 and His415. Residues 440–457 (HHPPEHEENDKENREIQK) show a composition bias toward basic and acidic residues. Residues 440-467 (HHPPEHEENDKENREIQKNHIAPRNKPI) form a disordered region.

It belongs to the AB hydrolase superfamily. Lipase family.

It is found in the cytoplasm. The protein localises to the membrane. Probable lipase. The sequence is that of Probable lipase C1672.09 from Schizosaccharomyces pombe (strain 972 / ATCC 24843) (Fission yeast).